A 117-amino-acid polypeptide reads, in one-letter code: Protein Aeq5-like2 (117 aa).

Residues Met1–Arg36 are Cytoplasmic-facing. Residues Thr37–Gly56 form a helical membrane-spanning segment. Residues Ser57–Ser117 are Extracellular-facing. 4 disulfide bridges follow: Cys59-Cys94, Cys63-Cys90, Cys70-Cys83, and Cys74-Cys80.

The mature peptide may be cleaved at a dibasic residue site and be shorter than the sequence shown (possibly residues 1-94). As to expression, expressed in endodermal ganglion neurons, apparently bipolar and following mesentery folds (observed in both planulae and primary polyps). It not expressed in nematocytes.

It is found in the membrane. This Nematostella vectensis (Starlet sea anemone) protein is Protein Aeq5-like2.